Reading from the N-terminus, the 193-residue chain is Interferon lambda-3 (193 aa).

A signal peptide spans 1-19 (MLLLLLPLLLAAVLTRTQA). Cystine bridges form between C35/C132, C69/C166, and C185/C192.

This sequence belongs to the lambda interferon family.

It is found in the secreted. Its function is as follows. Cytokine with antiviral, antitumour and immunomodulatory activities. Plays a critical role in the antiviral host defense, predominantly in the epithelial tissues. Acts as a ligand for the heterodimeric class II cytokine receptor composed of IL10RB and IFNLR1, and receptor engagement leads to the activation of the JAK/STAT signaling pathway resulting in the expression of IFN-stimulated genes (ISG), which mediate the antiviral state. Has a restricted receptor distribution and therefore restricted targets: is primarily active in epithelial cells and this cell type-selective action is because of the epithelial cell-specific expression of its receptor IFNLR1. Seems not to be essential for early virus-activated host defense in vaginal infection, but plays an important role in Toll-like receptor (TLR)-induced antiviral defense. Plays a significant role in the antiviral immune defense in the intestinal epithelium. Exerts an immunomodulatory effect by up-regulating MHC class I antigen expression. The protein is Interferon lambda-3 (Ifnl3) of Mus musculus (Mouse).